Reading from the N-terminus, the 629-residue chain is MFYPDPFDVIIIGGGHAGTEAAMAAARMGQQTLLLTHNIDTLGQMSCNPAIGGIGKGHLVKEVDALGGLMAKAIDQAGIQFRILNASKGPAVRATRAQADRVLYRQAVRTALENQPNLMIFQQAVEDLIVENDRVVGAVTQMGLKFRAKAVVLTVGTFLDGKIHIGLDNYSGGRAGDPPSIPLSRRLRELPLRVGRLKTGTPPRIDARTIDFSVLAQQHGDNPMPVFSFMGNASQHPQQVPCYITHTNEKTHDVIRSNLDRSPMYAGVIEGVGPRYCPSIEDKVMRFADRNQHQIFLEPEGLTSNEIYPNGISTSLPFDVQMQIVRSMQGMENAKIVRPGYAIEYDFFDPRDLKPTLESKFIQGLFFAGQINGTTGYEEAAAQGLLAGLNAARLSDDKEGWAPARSQAYLGVLVDDLCTLGTKEPYRMFTSRAEYRLMLREDNADLRLTEIGRELGLVDDERWARFNEKLENIERERQRLKSTWVTPSAEAAAEVNAHLTAPLSREASGEDLLRRPEMTYEKLTTLTPFAPALTDEQAAEQVEIQVKYEGYIARQQDEIEKQLRNENTLLPATLDYRQVSGLSNEVIAKLNDHKPASIGQASRISGVTPAAISILLVWLKKQGMLRRSA.

FAD contacts are provided by residues 13–18 (GGGHAG), Val-125, and Ser-180. 273–287 (GPRYCPSIEDKVMRF) contacts NAD(+). Gln-370 is an FAD binding site.

It belongs to the MnmG family. As to quaternary structure, homodimer. Heterotetramer of two MnmE and two MnmG subunits. It depends on FAD as a cofactor.

Its subcellular location is the cytoplasm. NAD-binding protein involved in the addition of a carboxymethylaminomethyl (cmnm) group at the wobble position (U34) of certain tRNAs, forming tRNA-cmnm(5)s(2)U34. The polypeptide is tRNA uridine 5-carboxymethylaminomethyl modification enzyme MnmG (Escherichia coli O157:H7).